The following is a 276-amino-acid chain: Large ribosomal subunit protein uL2 (276 aa).

The tract at residues 224–276 (VMNPVDHPHGGGEGKAPIGRKSPMTPWGKPTLGYKTRKKKNKSDKFIIRRRKK) is disordered. Residues 258-276 (KTRKKKNKSDKFIIRRRKK) show a composition bias toward basic residues.

Belongs to the universal ribosomal protein uL2 family. In terms of assembly, part of the 50S ribosomal subunit. Forms a bridge to the 30S subunit in the 70S ribosome.

Its function is as follows. One of the primary rRNA binding proteins. Required for association of the 30S and 50S subunits to form the 70S ribosome, for tRNA binding and peptide bond formation. It has been suggested to have peptidyltransferase activity; this is somewhat controversial. Makes several contacts with the 16S rRNA in the 70S ribosome. The polypeptide is Large ribosomal subunit protein uL2 (Geobacillus thermodenitrificans (strain NG80-2)).